A 909-amino-acid polypeptide reads, in one-letter code: Probable dipeptidyl-aminopeptidase B (909 aa).

Residues 1 to 63 form a disordered region; it reads MRVGSRINDE…HNHNGRAQGN (63 aa). At 1–94 the chain is on the cytoplasmic side; that stretch reads MRVGSRINDE…NGKSNQRRTL (94 aa). Over residues 27 to 38 the composition is skewed to low complexity; that stretch reads DSSSTASISLTL. A helical; Signal-anchor for type II membrane protein membrane pass occupies residues 95-115; the sequence is IVFWLLVALCVGGWAVAFLFF. Topologically, residues 116–909 are vacuolar; that stretch reads VTSPGNKTST…YSNFLPIRSF (794 aa). An N-linked (GlcNAc...) asparagine glycan is attached at asparagine 121. Residues 123–134 are compositionally biased toward polar residues; it reads TSTSPHSGSNSP. A disordered region spans residues 123–144; that stretch reads TSTSPHSGSNSPEGDVTKPGIP. 3 N-linked (GlcNAc...) asparagine glycosylation sites follow: asparagine 207, asparagine 303, and asparagine 355. Catalysis depends on serine 760, which acts as the Charge relay system. N-linked (GlcNAc...) asparagine glycans are attached at residues asparagine 814, asparagine 819, and asparagine 822. Active-site charge relay system residues include aspartate 837 and histidine 870. Asparagine 888 carries N-linked (GlcNAc...) asparagine glycosylation.

This sequence belongs to the peptidase S9B family.

The protein resides in the vacuole membrane. The catalysed reaction is Release of an N-terminal dipeptide, Xaa-Yaa-|-Zaa-, from a polypeptide, preferentially when Yaa is Pro, provided Zaa is neither Pro nor hydroxyproline.. Its function is as follows. Type IV dipeptidyl-peptidase which removes N-terminal dipeptides sequentially from polypeptides having unsubstituted N-termini provided that the penultimate residue is proline. This is Probable dipeptidyl-aminopeptidase B (DAPB) from Arthroderma benhamiae (strain ATCC MYA-4681 / CBS 112371) (Trichophyton mentagrophytes).